The sequence spans 347 residues: 5-deoxyribose 1-phosphate isomerase (347 aa).

Substrate-binding positions include 48-50 (RGA), arginine 91, and glutamine 198. Aspartate 239 (proton donor) is an active-site residue. 249–250 (NK) is a substrate binding site.

It belongs to the EIF-2B alpha/beta/delta subunits family. DrdI subfamily.

The enzyme catalyses 5-deoxy-alpha-D-ribose 1-phosphate = 5-deoxy-D-ribulose 1-phosphate. It functions in the pathway carbohydrate degradation. Catalyzes the isomerization of 5-deoxy-alpha-D-ribose 1-phosphate to 5-deoxy-D-ribulose 1-phosphate, as part of a 5-deoxyribose salvage pathway that recycles this toxic radical SAM enzyme by-product to mainstream metabolites. The protein is 5-deoxyribose 1-phosphate isomerase of Petrotoga mobilis (strain DSM 10674 / SJ95).